The sequence spans 279 residues: Energy-coupling factor transporter ATP-binding protein EcfA1 (279 aa).

The ABC transporter domain occupies 6 to 240 (VRLEHVFYKY…ADAMREIGLG (235 aa)). An ATP-binding site is contributed by 40–47 (GHNGSGKS).

Belongs to the ABC transporter superfamily. Energy-coupling factor EcfA family. As to quaternary structure, forms a stable energy-coupling factor (ECF) transporter complex composed of 2 membrane-embedded substrate-binding proteins (S component), 2 ATP-binding proteins (A component) and 2 transmembrane proteins (T component).

It localises to the cell membrane. Its function is as follows. ATP-binding (A) component of a common energy-coupling factor (ECF) ABC-transporter complex. Unlike classic ABC transporters this ECF transporter provides the energy necessary to transport a number of different substrates. In Listeria monocytogenes serotype 4b (strain F2365), this protein is Energy-coupling factor transporter ATP-binding protein EcfA1.